The primary structure comprises 142 residues: Large ribosomal subunit protein uL11 (142 aa).

It belongs to the universal ribosomal protein uL11 family. As to quaternary structure, part of the ribosomal stalk of the 50S ribosomal subunit. Interacts with L10 and the large rRNA to form the base of the stalk. L10 forms an elongated spine to which L12 dimers bind in a sequential fashion forming a multimeric L10(L12)X complex. Post-translationally, one or more lysine residues are methylated.

Its function is as follows. Forms part of the ribosomal stalk which helps the ribosome interact with GTP-bound translation factors. The polypeptide is Large ribosomal subunit protein uL11 (Photorhabdus laumondii subsp. laumondii (strain DSM 15139 / CIP 105565 / TT01) (Photorhabdus luminescens subsp. laumondii)).